An 86-amino-acid polypeptide reads, in one-letter code: Large ribosomal subunit protein uL10 (86 aa).

It belongs to the universal ribosomal protein uL10 family. In terms of assembly, part of the ribosomal stalk of the 50S ribosomal subunit. The N-terminus interacts with L11 and the large rRNA to form the base of the stalk. The C-terminus forms an elongated spine to which L12 dimers bind in a sequential fashion forming a multimeric L10(L12)X complex.

In terms of biological role, forms part of the ribosomal stalk, playing a central role in the interaction of the ribosome with GTP-bound translation factors. The protein is Large ribosomal subunit protein uL10 (rplJ) of Serratia marcescens.